The chain runs to 464 residues: Glutamate decarboxylase beta (464 aa).

Lysine 275 is subject to N6-(pyridoxal phosphate)lysine.

The protein belongs to the group II decarboxylase family. Requires pyridoxal 5'-phosphate as cofactor.

The enzyme catalyses L-glutamate + H(+) = 4-aminobutanoate + CO2. Converts internalized glutamate to GABA and increases the internal pH. Involved in glutamate-dependent acid resistance in gastric fluid. The sequence is that of Glutamate decarboxylase beta (gadB) from Listeria innocua serovar 6a (strain ATCC BAA-680 / CLIP 11262).